Here is a 412-residue protein sequence, read N- to C-terminus: Zinc finger protein 260 (412 aa).

13 C2H2-type zinc fingers span residues 27–49 (YECN…KKMH), 55–77 (HECT…LRSH), 83–105 (YKCN…QKHH), 136–158 (YACK…EKIH), 164–186 (FECN…QNIH), 192–214 (FKCS…QRIH), 220–242 (YECK…QRSH), 248–270 (YTCK…EKIH), 276–298 (YKCN…HNIH), 304–326 (YECN…VRIH), 332–354 (YECK…MRSH), 360–382 (YGCN…MRIH), and 388–412 (YQCS…IHTH).

This sequence belongs to the krueppel C2H2-type zinc-finger protein family. In terms of assembly, binds DNA. Interacts with GATA4.

Its subcellular location is the nucleus. Its function is as follows. Transcription factor that acts as a cardiac regulator and an effector of alpha1-adrenergic signaling. Binds to PE response elements (PERE) present in the promoter of genes such as ANF/NPPA and acts as a direct transcriptional activator of NPPA. Also acts as a cofactor with GATA4, a key cardiac regulator. In Homo sapiens (Human), this protein is Zinc finger protein 260 (ZNF260).